The following is a 599-amino-acid chain: Aspartate--tRNA(Asp/Asn) ligase (599 aa).

E174 contacts L-aspartate. Residues 198 to 201 are aspartate; the sequence is QLFK. Residue R220 participates in L-aspartate binding. ATP-binding positions include 220–222 and Q229; that span reads RDE. L-aspartate is bound at residue H457. E491 contributes to the ATP binding site. Position 498 (R498) interacts with L-aspartate. 543–546 lines the ATP pocket; it reads GLDR.

The protein belongs to the class-II aminoacyl-tRNA synthetase family. Type 1 subfamily. As to quaternary structure, homodimer.

It is found in the cytoplasm. The enzyme catalyses tRNA(Asx) + L-aspartate + ATP = L-aspartyl-tRNA(Asx) + AMP + diphosphate. Aspartyl-tRNA synthetase with relaxed tRNA specificity since it is able to aspartylate not only its cognate tRNA(Asp) but also tRNA(Asn). Reaction proceeds in two steps: L-aspartate is first activated by ATP to form Asp-AMP and then transferred to the acceptor end of tRNA(Asp/Asn). This chain is Aspartate--tRNA(Asp/Asn) ligase, found in Paraburkholderia phytofirmans (strain DSM 17436 / LMG 22146 / PsJN) (Burkholderia phytofirmans).